We begin with the raw amino-acid sequence, 299 residues long: Acetylglutamate kinase (299 aa).

Residues 72-73 (GG), Arg94, and Asn196 contribute to the substrate site.

It belongs to the acetylglutamate kinase family. ArgB subfamily.

The protein resides in the cytoplasm. The enzyme catalyses N-acetyl-L-glutamate + ATP = N-acetyl-L-glutamyl 5-phosphate + ADP. It functions in the pathway amino-acid biosynthesis; L-arginine biosynthesis; N(2)-acetyl-L-ornithine from L-glutamate: step 2/4. Its function is as follows. Catalyzes the ATP-dependent phosphorylation of N-acetyl-L-glutamate. The sequence is that of Acetylglutamate kinase from Paraburkholderia phymatum (strain DSM 17167 / CIP 108236 / LMG 21445 / STM815) (Burkholderia phymatum).